The following is a 415-amino-acid chain: Ribulose bisphosphate carboxylase/oxygenase activase (415 aa).

37 to 44 (GRKGEGKT) serves as a coordination point for ATP.

The protein belongs to the RuBisCO activase family.

Activation of RuBisCO (ribulose-1,5-bisohosphate carboxylase/oxygenase; EC 4.1.1.39) involves the ATP-dependent carboxylation of the epsilon-amino group of lysine leading to a carbamate structure. The polypeptide is Ribulose bisphosphate carboxylase/oxygenase activase (rca) (Anabaena sp. (strain CA / ATCC 33047)).